We begin with the raw amino-acid sequence, 1315 residues long: Serine/threonine-protein kinase 36 (1315 aa).

Positions 4 to 254 constitute a Protein kinase domain; sequence YHVLEMIGEG…WPDLLYHPFI (251 aa). Residues 10–18 and lysine 33 each bind ATP; that span reads IGEGSFGRV. Aspartate 125 (proton acceptor) is an active-site residue. Disordered regions lie at residues 312–345 and 365–405; these read EAMQ…PRLG and SWAE…RSTD. Residues 379-397 are compositionally biased toward basic and acidic residues; the sequence is RENRTTPDCERAFPEERPE.

This sequence belongs to the protein kinase superfamily. Ser/Thr protein kinase family. In terms of assembly, interacts with SPAG16 and KIF27. Requires Mg(2+) as cofactor.

Its subcellular location is the cytoplasm. The protein localises to the nucleus. It is found in the cytoskeleton. The protein resides in the cilium axoneme. It catalyses the reaction L-seryl-[protein] + ATP = O-phospho-L-seryl-[protein] + ADP + H(+). The enzyme catalyses L-threonyl-[protein] + ATP = O-phospho-L-threonyl-[protein] + ADP + H(+). Functionally, serine/threonine protein kinase which plays an important role in the sonic hedgehog (Shh) pathway by regulating the activity of GLI transcription factors. Controls the activity of the transcriptional regulators GLI1, GLI2 and GLI3 by opposing the effect of SUFU and promoting their nuclear localization. GLI2 requires an additional function of STK36 to become transcriptionally active, but the enzyme does not need to possess an active kinase catalytic site for this to occur. Required for postnatal development, possibly by regulating the homeostasis of cerebral spinal fluid or ciliary function. Essential for construction of the central pair apparatus of motile cilia. The sequence is that of Serine/threonine-protein kinase 36 from Pongo abelii (Sumatran orangutan).